Consider the following 332-residue polypeptide: Large ribosomal subunit protein uL29m (332 aa).

Residues 19–40 are disordered; it reads RFTKPKPKPAKRENVRLPTQRT. Residues 264–327 adopt a coiled-coil conformation; that stretch reads TSENTESAIA…IQLQEEDAKN (64 aa).

Belongs to the universal ribosomal protein uL29 family. As to quaternary structure, component of the mitochondrial large ribosomal subunit. Mature mitochondrial ribosomes consist of a small (37S) and a large (54S) subunit. The 37S subunit contains at least 33 different proteins and 1 molecule of RNA (15S). The 54S subunit contains at least 45 different proteins and 1 molecule of RNA (21S).

The protein resides in the mitochondrion. The polypeptide is Large ribosomal subunit protein uL29m (MRPL4) (Kluyveromyces lactis (strain ATCC 8585 / CBS 2359 / DSM 70799 / NBRC 1267 / NRRL Y-1140 / WM37) (Yeast)).